The sequence spans 533 residues: Protein trichome birefringence-like 18 (533 aa).

Residues 21 to 41 (VSTVAIAIGGLASFFVFGLLL) traverse the membrane as a helical; Signal-anchor for type II membrane protein segment. The segment at 93-171 (SDSSSGLPVV…PDDVSETASA (79 aa)) is disordered. The span at 113-154 (SSDRKLETPLTQEKEDLVSSDITEKTDVQSGERETNVSKAED) shows a compositional bias: basic and acidic residues. The GDS motif signature appears at 248 to 250 (GDS). A disordered region spans residues 475–502 (HDGHPGPFRSPDPNKITKRGPDGRPPPQ). Positions 503-517 (DCLHWCMPGPVDTWN) match the DCXHWCLPGXXDXWN motif motif.

Belongs to the PC-esterase family. TBL subfamily.

It localises to the membrane. Functionally, may act as a bridging protein that binds pectin and other cell wall polysaccharides. Probably involved in maintaining esterification of pectins. May be involved in the specific O-acetylation of cell wall polymers. The protein is Protein trichome birefringence-like 18 (TBL18) of Arabidopsis thaliana (Mouse-ear cress).